A 147-amino-acid chain; its full sequence is Response regulator Rcp1 (147 aa).

The Response regulatory domain occupies 10–135 (VILLVEDSKA…DLFKMVQGIE (126 aa)). The residue at position 68 (Asp-68) is a 4-aspartylphosphate.

Phosphorylated by Cph1.

Its function is as follows. Forms a two-component system with Cph1 in which it acts as receiver substrate. The chain is Response regulator Rcp1 (rcp1) from Synechocystis sp. (strain ATCC 27184 / PCC 6803 / Kazusa).